We begin with the raw amino-acid sequence, 775 residues long: Mitosis inducer protein kinase cdr2 (775 aa).

Residues 10 to 262 (WELGLSLGSG…MEQIREHPFL (253 aa)) enclose the Protein kinase domain. ATP-binding positions include 16–24 (LGSGGPNSS) and Lys-39. Asp-133 acts as the Proton acceptor in catalysis. Residues Ser-309, Ser-311, and Ser-476 each carry the phosphoserine modification. Low complexity predominate over residues 549-563 (NNIDNNNYNQPYANA). The tract at residues 549 to 620 (NNIDNNNYNQ…TKKKLSGSPF (72 aa)) is disordered. Residues 584 to 593 (LSQSPASYDS) are compositionally biased toward polar residues. A phosphoserine mark is found at Ser-587 and Ser-632.

The protein belongs to the protein kinase superfamily. CAMK Ser/Thr protein kinase family. NIM1 subfamily. As to quaternary structure, interacts with blt1 and mid1. Autophosphorylated.

The catalysed reaction is L-seryl-[protein] + ATP = O-phospho-L-seryl-[protein] + ADP + H(+). It carries out the reaction L-threonyl-[protein] + ATP = O-phospho-L-threonyl-[protein] + ADP + H(+). Functionally, acts as a mitotic inducer. In G2 it negatively regulates wee1, a mitotic inhibitor. Also has a role in cytokinesis where it required for proper septum formation. The sequence is that of Mitosis inducer protein kinase cdr2 (cdr2) from Schizosaccharomyces pombe (strain 972 / ATCC 24843) (Fission yeast).